The sequence spans 163 residues: Campylobacter invasion antigen D (163 aa).

The MKD signature appears at 135–145 (KKDDLENRLNL).

As to quaternary structure, interacts with the host cell protein IQGAP1, thus displacing RACGAP1 from the IQGAP1 complex.

It localises to the secreted. Its subcellular location is the host cytoplasm. The protein resides in the host cytosol. In terms of biological role, effector protein required for the development of acute disease and colon inflammatory lesions. Required for maximal host cell invasion and maximal secretion of the inflammatory chemokine interleukin-8 (IL-8) from host cells. Acts by activating the host MAP kinase signaling pathways ERK-1/2 and p38 to promote both cellular invasion and the release of IL-8. CiaD mediated activation of ERK-1/2 leads to the phosphorylation of host cortactin (CTTN) on serine residues and association of cortactin with N-WASP, promoting actin cytoskeleton rearrangement, membrane ruffling and host cell invasion. In addition, maximal host cell invasion requires interaction with the host cell protein IQGAP1, a Ras GTPase-activating-like protein. Binding to IQGAP1 facilitates the activation of the Rho GTPases RAC1 and CDC42, further promoting actin reorganization and bacterial uptake. CiaD promotes RAC1 activation by excluding RACGAP1 from the IQGAP1 complex, preventing the deactivation of RAC1. CiaD probably activates ERK signaling upstream or independently of IQGAP1. This chain is Campylobacter invasion antigen D, found in Campylobacter jejuni subsp. jejuni serotype O:2 (strain ATCC 700819 / NCTC 11168).